We begin with the raw amino-acid sequence, 171 residues long: Small ribosomal subunit protein mS25 (171 aa).

This sequence belongs to the mitochondrion-specific ribosomal protein mS25 family. Component of the mitochondrial ribosome small subunit (28S) which comprises a 12S rRNA and about 30 distinct proteins.

The protein resides in the mitochondrion. This is Small ribosomal subunit protein mS25 (Mrps25) from Mus musculus (Mouse).